The primary structure comprises 397 residues: E3 ubiquitin-protein ligase RNF149 (397 aa).

The N-terminal stretch at 1-20 (MLRWLCLYSALCALTHGSSA) is a signal peptide. Residues 39-49 (TNSSVTGSTES) are compositionally biased toward polar residues. The segment at 39 to 60 (TNSSVTGSTESGRYGDSSPKES) is disordered. Asn-40 and Asn-140 each carry an N-linked (GlcNAc...) asparagine glycan. The 88-residue stretch at 83–170 (YIVPGTSAAA…PKGMEIMEPL (88 aa)) folds into the PA domain. A helical transmembrane segment spans residues 196–216 (VVFVAIAFITMMIISLAWLIF). A glycan (N-linked (GlcNAc...) asparagine) is linked at Asn-231. The RING-type; atypical zinc-finger motif lies at 264-305 (CAVCIENYKTKDLVRILPCKHIFHRLCIDPWLIEHRTCPMCK). Residues 341-397 (SITQEESRSEGNNLPSSSTGSSLQQSNSVKDDAGETTALLDDPGNDNAAATHTQDSH) form a disordered region. The segment covering 351–368 (GNNLPSSSTGSSLQQSNS) has biased composition (low complexity). The span at 388 to 397 (AAATHTQDSH) shows a compositional bias: polar residues.

Its subcellular location is the membrane. It carries out the reaction S-ubiquitinyl-[E2 ubiquitin-conjugating enzyme]-L-cysteine + [acceptor protein]-L-lysine = [E2 ubiquitin-conjugating enzyme]-L-cysteine + N(6)-ubiquitinyl-[acceptor protein]-L-lysine.. It functions in the pathway protein modification; protein ubiquitination. E3 ubiquitin-protein ligase. Ubiquitinates BRAF, inducing its proteasomal degradation. This chain is E3 ubiquitin-protein ligase RNF149 (rnf149), found in Xenopus laevis (African clawed frog).